A 349-amino-acid chain; its full sequence is Holliday junction branch migration complex subunit RuvB (349 aa).

The large ATPase domain (RuvB-L) stretch occupies residues 1–181 (MDDRILTSVN…FGVLCPMEFY (181 aa)). Residues leucine 20, arginine 21, glycine 62, lysine 65, threonine 66, threonine 67, 128-130 (EDY), arginine 171, tyrosine 181, and arginine 218 each bind ATP. Position 66 (threonine 66) interacts with Mg(2+). The tract at residues 182–252 (NDEELKEIIV…SAKKALNLLE (71 aa)) is small ATPAse domain (RuvB-S). Residues 255–349 (DEGFDSIDNK…DQCSFFKKEK (95 aa)) are head domain (RuvB-H). DNA-binding residues include arginine 310 and arginine 315.

This sequence belongs to the RuvB family. Homohexamer. Forms an RuvA(8)-RuvB(12)-Holliday junction (HJ) complex. HJ DNA is sandwiched between 2 RuvA tetramers; dsDNA enters through RuvA and exits via RuvB. An RuvB hexamer assembles on each DNA strand where it exits the tetramer. Each RuvB hexamer is contacted by two RuvA subunits (via domain III) on 2 adjacent RuvB subunits; this complex drives branch migration. In the full resolvosome a probable DNA-RuvA(4)-RuvB(12)-RuvC(2) complex forms which resolves the HJ.

The protein localises to the cytoplasm. The enzyme catalyses ATP + H2O = ADP + phosphate + H(+). In terms of biological role, the RuvA-RuvB-RuvC complex processes Holliday junction (HJ) DNA during genetic recombination and DNA repair, while the RuvA-RuvB complex plays an important role in the rescue of blocked DNA replication forks via replication fork reversal (RFR). RuvA specifically binds to HJ cruciform DNA, conferring on it an open structure. The RuvB hexamer acts as an ATP-dependent pump, pulling dsDNA into and through the RuvAB complex. RuvB forms 2 homohexamers on either side of HJ DNA bound by 1 or 2 RuvA tetramers; 4 subunits per hexamer contact DNA at a time. Coordinated motions by a converter formed by DNA-disengaged RuvB subunits stimulates ATP hydrolysis and nucleotide exchange. Immobilization of the converter enables RuvB to convert the ATP-contained energy into a lever motion, pulling 2 nucleotides of DNA out of the RuvA tetramer per ATP hydrolyzed, thus driving DNA branch migration. The RuvB motors rotate together with the DNA substrate, which together with the progressing nucleotide cycle form the mechanistic basis for DNA recombination by continuous HJ branch migration. Branch migration allows RuvC to scan DNA until it finds its consensus sequence, where it cleaves and resolves cruciform DNA. The polypeptide is Holliday junction branch migration complex subunit RuvB (Clostridium acetobutylicum (strain ATCC 824 / DSM 792 / JCM 1419 / IAM 19013 / LMG 5710 / NBRC 13948 / NRRL B-527 / VKM B-1787 / 2291 / W)).